The chain runs to 556 residues: Glucose-6-phosphate isomerase (556 aa).

The active-site Proton donor is Glu-360. Active-site residues include His-391 and Lys-519.

This sequence belongs to the GPI family.

It is found in the cytoplasm. The enzyme catalyses alpha-D-glucose 6-phosphate = beta-D-fructose 6-phosphate. It participates in carbohydrate biosynthesis; gluconeogenesis. It functions in the pathway carbohydrate degradation; glycolysis; D-glyceraldehyde 3-phosphate and glycerone phosphate from D-glucose: step 2/4. Its function is as follows. Catalyzes the reversible isomerization of glucose-6-phosphate to fructose-6-phosphate. This is Glucose-6-phosphate isomerase from Acinetobacter baumannii (strain ATCC 17978 / DSM 105126 / CIP 53.77 / LMG 1025 / NCDC KC755 / 5377).